The chain runs to 120 residues: Large ribosomal subunit protein eL8 (120 aa).

The protein belongs to the eukaryotic ribosomal protein eL8 family. As to quaternary structure, part of the 50S ribosomal subunit. Probably part of the RNase P complex.

It localises to the cytoplasm. Its function is as follows. Multifunctional RNA-binding protein that recognizes the K-turn motif in ribosomal RNA, the RNA component of RNase P, box H/ACA, box C/D and box C'/D' sRNAs. The polypeptide is Large ribosomal subunit protein eL8 (Haloquadratum walsbyi (strain DSM 16790 / HBSQ001)).